The sequence spans 1427 residues: Protein NPAT (1427 aa).

An interaction with MIZF region spans residues 1-318 (MLLPSDVARL…EEAIQDILEQ (318 aa)). The LisH domain occupies 3–35 (LPSDVARLVLGYLQQENLISTCQTFILESSDLK). Required for activation of histone gene transcription and interaction with MIZF stretches follow at residues 5 to 25 (SDVA…STCQ) and 121 to 145 (KRQR…YLSG). A disordered region spans residues 199 to 231 (KKAHASLMSPGRRKSESQRKSTTLSGPHSTIRN). Position 207 is a phosphoserine (serine 207). Residues 218–231 (KSTTLSGPHSTIRN) are compositionally biased toward polar residues. The interval 262 to 338 (KLAENINKFL…FDLFDYGKTK (77 aa)) is mediates transcriptional activation. 2 positions are modified to phosphoserine: serine 554 and serine 599. Residues 628-644 (SLSSTKQPSNDSASVEL) are compositionally biased toward polar residues. 2 disordered regions span residues 628 to 669 (SLSS…VKEE) and 683 to 732 (EKVA…SAEI). The tract at residues 629 to 653 (LSSTKQPSNDSASVELNHTENEAQA) is required for acceleration of G1 phase. Over residues 654 to 665 (SKSENSQEPSSS) the composition is skewed to low complexity. The segment covering 695–711 (VENSHSLPPESVCSSVG) has biased composition (polar residues). 2 positions are modified to phosphoserine; by CDK2: serine 775 and serine 779. 2 required for acceleration of G1 phase regions span residues 828-853 (QNED…IQLM) and 1039-1054 (KSEE…SIVP). Disordered regions lie at residues 1095 to 1121 (FPNL…EKEK) and 1133 to 1152 (SAIS…KVSP). Positions 1097-1114 (NLDSPNVSSTLKPPSNNA) are enriched in polar residues. Phosphoserine; by CDK2 is present on serine 1100. Residues lysine 1116 and lysine 1149 each participate in a glycyl lysine isopeptide (Lys-Gly) (interchain with G-Cter in SUMO2) cross-link. Over residues 1140-1151 (TIRETQSEKKVS) the composition is skewed to basic and acidic residues. 2 positions are modified to phosphoserine: serine 1151 and serine 1200. Lysine 1228 bears the N6-acetyllysine mark. Positions 1228-1252 (KDLKQEQTKSASSLITTEMLQDIQR) are required for acceleration of G1 phase. 2 disordered regions span residues 1253 to 1327 (HSSV…SENS) and 1348 to 1413 (SATP…FPAG). Phosphoserine is present on serine 1254. Threonine 1270 bears the Phosphothreonine; by CDK2 mark. Basic and acidic residues predominate over residues 1276 to 1285 (GEKHKEEPID). Residue lysine 1280 forms a Glycyl lysine isopeptide (Lys-Gly) (interchain with G-Cter in SUMO2) linkage. The required for acceleration of G1 phase stretch occupies residues 1325–1349 (ENSVNMAAHTLMILSRAAISRTTSA). Residues 1348–1365 (SATPLKDNTQQFRASSRS) show a composition bias toward polar residues. Threonine 1350 is modified (phosphothreonine; by CDK2). The span at 1371–1382 (KIEELDERERNS) shows a compositional bias: basic and acidic residues. Residues 1383 to 1394 (RPSSKNLTNSSI) show a composition bias toward polar residues. The segment covering 1396-1406 (MKKKKIKKKKL) has biased composition (basic residues).

The protein belongs to the NPAT family. In terms of assembly, interacts with the cylin/CDK complexes CCNE1/CDK2 and CCNA1/CDK2. Interacts with BZW1, CASP8AP2, CREBBP, MIZF and YY1. Interacts with the RUVBL1, RUVBL2 and TRRAP subunits of the NuA4 complex. May also interact with GAPDH, NME1, NME2 and STIP1. In terms of processing, phosphorylated at Ser-775, Ser-779, Ser-1100, Thr-1270 and Thr-1350 by CCNE1/CDK2 at G1-S transition and until prophase, which promotes association with histone gene clusters and stimulates activation of histone transcription. Also phosphorylated by CCNA1/CDK2 in vitro. In terms of tissue distribution, ubiquitously expressed.

It is found in the nucleus. The protein localises to the cajal body. Its function is as follows. Required for progression through the G1 and S phases of the cell cycle and for S phase entry. Activates transcription of the histone H2A, histone H2B, histone H3 and histone H4 genes in conjunction with MIZF. Also positively regulates the ATM, MIZF and PRKDC promoters. Transcriptional activation may be accomplished at least in part by the recruitment of the NuA4 histone acetyltransferase (HAT) complex to target gene promoters. The polypeptide is Protein NPAT (NPAT) (Homo sapiens (Human)).